The chain runs to 252 residues: Small ribosomal subunit protein uS2B (252 aa).

N-acetylserine is present on S2. 2 stretches are compositionally biased toward acidic residues: residues 213–229 (VAEEAAAAEEGEEEEVK) and 241–252 (EWAEENADNVEW). The tract at residues 213–252 (VAEEAAAAEEGEEEEVKEEVTEGQAEATEWAEENADNVEW) is disordered.

This sequence belongs to the universal ribosomal protein uS2 family. As to quaternary structure, component of the small ribosomal subunit. Mature ribosomes consist of a small (40S) and a large (60S) subunit. The 40S subunit contains about 33 different proteins and 1 molecule of RNA (18S). The 60S subunit contains about 49 different proteins and 3 molecules of RNA (25S, 5.8S and 5S). Interacts with RPS21.

It is found in the cytoplasm. Required for the assembly and/or stability of the 40S ribosomal subunit. Required for the processing of the 20S rRNA-precursor to mature 18S rRNA in a late step of the maturation of 40S ribosomal subunits. In Saccharomyces cerevisiae (strain RM11-1a) (Baker's yeast), this protein is Small ribosomal subunit protein uS2B.